The primary structure comprises 632 residues: Thioredoxin domain-containing protein C959.05c (632 aa).

An N-terminal signal peptide occupies residues 1-22; it reads MKLFLYHFTFIVYYFIISFSYA. 3 N-linked (GlcNAc...) asparagine glycosylation sites follow: Asn-35, Asn-41, and Asn-140. Residues 153–284 form the Thioredoxin domain; that stretch reads SDSSSTDPAF…LLSYSNQVAS (132 aa). Cys-209 and Cys-212 are joined by a disulfide. N-linked (GlcNAc...) asparagine glycosylation is present at Asn-557. A helical transmembrane segment spans residues 583 to 603; sequence LIVFNLLIALLILSILTIISA.

It belongs to the protein disulfide isomerase family.

Its subcellular location is the endoplasmic reticulum membrane. It carries out the reaction Catalyzes the rearrangement of -S-S- bonds in proteins.. Its function is as follows. Acts as a membrane-bound chaperone in endoplasmic reticulum quality control. Probably facilitates presentation of substrate to membrane-bound components of the degradation machinery. The sequence is that of Thioredoxin domain-containing protein C959.05c from Schizosaccharomyces pombe (strain 972 / ATCC 24843) (Fission yeast).